Here is a 337-residue protein sequence, read N- to C-terminus: Cysteinyl leukotriene receptor 1 (337 aa).

Residues 1–28 (MDETGNLTVSSATCHDTIDDFRNQVYST) are Extracellular-facing. Asparagine 6 is a glycosylation site (N-linked (GlcNAc...) asparagine). The helical transmembrane segment at 29-49 (LYSMISVVGFFGNGFVLYVLI) threads the bilayer. Over 50-57 (KTYHKKSA) the chain is Cytoplasmic. The chain crosses the membrane as a helical span at residues 58–78 (FQVYMINLAVADLLCVCTLPL). Residues 79 to 106 (RVVYYVHKGIWLFGDFLCRLSTYALYVN) are Extracellular-facing. Cysteine 96 and cysteine 173 are joined by a disulfide. The chain crosses the membrane as a helical span at residues 107–127 (LYCSIFFMTAMSFFRCIAIVF). At 128–141 (PVQNINLVTQKKAR) the chain is on the cytoplasmic side. The helical transmembrane segment at 142 to 162 (FVCVGIWIFVILTSSPFLMAK) threads the bilayer. Over 163–193 (PQKDEKNNTKCFEPPQDNQTKNHVLVLHYVS) the chain is Extracellular. Residues asparagine 169 and asparagine 180 are each glycosylated (N-linked (GlcNAc...) asparagine). A helical membrane pass occupies residues 194 to 214 (LFVGFIIPFVIIIVCYTMIIL). Residues 215–230 (TLLKKSMKKNLSSHKK) are Cytoplasmic-facing. Residues 231-251 (AIGMIMVVTAAFLVSFMPYHI) traverse the membrane as a helical segment. Topologically, residues 252 to 276 (QRTIHLHFLHNETKPCDSVLRMQKS) are extracellular. Asparagine 262 carries an N-linked (GlcNAc...) asparagine glycan. The chain crosses the membrane as a helical span at residues 277–297 (VVITLSLAASNCCFDPLLYFF). Topologically, residues 298-337 (SGGNFRKRLSTFRKHSLSSVTYVPRKKASLPEKGEEICKV) are cytoplasmic.

Belongs to the G-protein coupled receptor 1 family. Widely expressed, with highest levels in spleen and peripheral blood leukocytes. Lower expression in several tissues, such as lung (mostly in smooth muscle bundles and alveolar macrophages), placenta, small intestine, pancreas, colon and heart.

It is found in the cell membrane. Receptor for cysteinyl leukotrienes mediating bronchoconstriction of individuals with and without asthma. Stimulation by LTD4 results in the contraction and proliferation of smooth muscle, edema, eosinophil migration and damage to the mucus layer in the lung. This response is mediated via a G-protein that activates a phosphatidylinositol-calcium second messenger system. The rank order of affinities for the leukotrienes is LTD4 &gt;&gt; LTE4 = LTC4 &gt;&gt; LTB4. The sequence is that of Cysteinyl leukotriene receptor 1 (CYSLTR1) from Homo sapiens (Human).